The chain runs to 742 residues: RING finger protein 145 homolog (742 aa).

Helical transmembrane passes span Ala-109–Leu-129, His-138–Leu-158, His-178–Val-198, Ala-233–Ile-253, Ile-285–Leu-305, Ile-318–Val-338, Ser-368–Met-388, Ile-395–Ile-415, Ile-438–Leu-458, Ile-463–Ile-483, and Val-533–Ile-553. The segment at Cys-592–Cys-630 adopts an RING-type; atypical zinc-finger fold. Disordered regions lie at residues Lys-642 to Met-684 and Ala-722 to Asn-742. Residues Ala-659–Pro-672 are compositionally biased toward acidic residues.

It localises to the membrane. Its subcellular location is the golgi apparatus. It is found in the cis-Golgi network. The protein localises to the trans-Golgi network. The catalysed reaction is S-ubiquitinyl-[E2 ubiquitin-conjugating enzyme]-L-cysteine + [acceptor protein]-L-lysine = [E2 ubiquitin-conjugating enzyme]-L-cysteine + N(6)-ubiquitinyl-[acceptor protein]-L-lysine.. Functionally, E3 ubiquitin ligase that catalyzes the direct transfer of ubiquitin from E2 ubiquitin-conjugating enzyme to a specific substrate. Acting downstream of probable Golgi transport protein eas-1, involved in inhibition of activation of transcription factor sbp-1, thereby playing a role in regulating AMsh glial cell size. In Caenorhabditis elegans, this protein is RING finger protein 145 homolog.